A 367-amino-acid chain; its full sequence is NADH-quinone oxidoreductase subunit H (367 aa).

8 helical membrane passes run 18–38 (VLLF…VAYL), 87–107 (LCFL…WAVI), 132–152 (IGVL…IIAG), 180–200 (LTIV…IVIA), 204–224 (MPYW…ISAL), 257–277 (FFLG…IFFF), 291–311 (IIPG…CFIW), and 328–348 (GWKV…GILV).

This sequence belongs to the complex I subunit 1 family. NDH-1 is composed of 14 different subunits. Subunits NuoA, H, J, K, L, M, N constitute the membrane sector of the complex.

The protein resides in the cell inner membrane. The catalysed reaction is a quinone + NADH + 5 H(+)(in) = a quinol + NAD(+) + 4 H(+)(out). Its function is as follows. NDH-1 shuttles electrons from NADH, via FMN and iron-sulfur (Fe-S) centers, to quinones in the respiratory chain. The immediate electron acceptor for the enzyme in this species is believed to be ubiquinone. Couples the redox reaction to proton translocation (for every two electrons transferred, four hydrogen ions are translocated across the cytoplasmic membrane), and thus conserves the redox energy in a proton gradient. This subunit may bind ubiquinone. The protein is NADH-quinone oxidoreductase subunit H of Ehrlichia ruminantium (strain Gardel).